The sequence spans 80 residues: SLHRPPGCRHCVGQLRLCDLDTADAVEEMGAEHVPCPVDDIVVDEDNKVVTTPAYMLAQNIAEAASGIEKLVARVLVLTA.

It belongs to the peptidase C56 family. As to quaternary structure, homodimer.

It catalyses the reaction glyoxal + H2O = glycolate + H(+). Functionally, displays glyoxalase activity, catalyzing the conversion of glyoxal to glycolate. However, this apparent glyoxalase activity may reflect a deglycase activity, which could be the primary function of this protein like other DJ-1 superfamily members such as PARK7, YajL, YhbO and HchA. Is not able to use methylglyoxal as substrate. The chain is Putative glyoxalase ElbB (elbB) from Klebsiella oxytoca.